The sequence spans 262 residues: Proenkephalin-A-A (262 aa).

A signal peptide spans 1-24 (MGLEARHCCMFLLVFASLSVEIRA). 3 cysteine pairs are disulfide-bonded: cysteine 26–cysteine 48, cysteine 30–cysteine 52, and cysteine 33–cysteine 65. Propeptides lie at residues 110-131 (MDEL…LAKN), 139-177 (EYDS…GEIN), 190-201 (STDLEDETSGIQ), 211-221 (VGRPEWWEDYQ), and 229-253 (TRFT…PDME).

The protein belongs to the opioid neuropeptide precursor family. In terms of processing, the N-terminal domain contains 6 conserved cysteines thought to be involved in disulfide bonding and/or processing.

It is found in the secreted. In terms of biological role, enkephalin neuropeptides compete with and mimic the effects of opiate drugs. They play a role in a number of physiologic functions, including pain perception and responses to stress. This chain is Proenkephalin-A-A (penk-a), found in Xenopus laevis (African clawed frog).